The following is a 495-amino-acid chain: Leucine aminopeptidase 2 (495 aa).

The N-terminal stretch at 1–21 (MKSQLLSLAVAVSTISQGVVG) is a signal peptide. The 95-residue stretch at 124 to 218 (PPANKIMAEL…EDGKNLASLV (95 aa)) folds into the PA domain. N-linked (GlcNAc...) asparagine glycans are attached at residues N142 and N235. Zn(2+) is bound by residues H259 and D271. N-linked (GlcNAc...) asparagine glycosylation is present at N272. E303 (proton acceptor) is an active-site residue. Zn(2+) contacts are provided by E304 and D332. N-linked (GlcNAc...) asparagine glycosylation is present at N352. Position 430 (H430) interacts with Zn(2+).

It belongs to the peptidase M28 family. M28A subfamily. In terms of assembly, monomer. The cofactor is Zn(2+).

Its subcellular location is the secreted. Functionally, extracellular aminopeptidase that releases a wide variety of amino acids from natural peptides and contributes to pathogenicity. This Trichophyton tonsurans (Scalp ringworm fungus) protein is Leucine aminopeptidase 2 (LAP2).